Consider the following 329-residue polypeptide: GTP 3',8-cyclase (329 aa).

The region spanning 8-234 (AFARKFYYLR…QLRQRSDGPA (227 aa)) is the Radical SAM core domain. R17 contacts GTP. Residues C24 and C28 each coordinate [4Fe-4S] cluster. Y30 serves as a coordination point for S-adenosyl-L-methionine. Position 31 (C31) interacts with [4Fe-4S] cluster. Residue R68 participates in GTP binding. G72 provides a ligand contact to S-adenosyl-L-methionine. Residue T99 coordinates GTP. Residue S123 coordinates S-adenosyl-L-methionine. GTP is bound at residue K160. M194 contacts S-adenosyl-L-methionine. The [4Fe-4S] cluster site is built by C257 and C260. Position 262–264 (262–264 (RLR)) interacts with GTP. C274 contacts [4Fe-4S] cluster.

It belongs to the radical SAM superfamily. MoaA family. As to quaternary structure, monomer and homodimer. Requires [4Fe-4S] cluster as cofactor.

It catalyses the reaction GTP + AH2 + S-adenosyl-L-methionine = (8S)-3',8-cyclo-7,8-dihydroguanosine 5'-triphosphate + 5'-deoxyadenosine + L-methionine + A + H(+). The protein operates within cofactor biosynthesis; molybdopterin biosynthesis. Functionally, catalyzes the cyclization of GTP to (8S)-3',8-cyclo-7,8-dihydroguanosine 5'-triphosphate. The protein is GTP 3',8-cyclase of Escherichia fergusonii (strain ATCC 35469 / DSM 13698 / CCUG 18766 / IAM 14443 / JCM 21226 / LMG 7866 / NBRC 102419 / NCTC 12128 / CDC 0568-73).